The following is a 31-amino-acid chain: SETDSRKEGRMGQKNAVIRQWCENDCNYAPK.

This sequence belongs to the scolopendra toxin 1 family. Contains one or more disulfide bonds. As to expression, expressed by the venom gland.

It is found in the secreted. This is Scolopendra 4610.56 Da toxin from Scolopendra viridicornis nigra (Brazilian giant centipede).